Consider the following 413-residue polypeptide: BSD domain-containing protein 1-A (413 aa).

The BSD domain maps to 146–198 (WLAYWDPEQRKAEISELLVTSPSIRALFTKMVPAAVSHSEFWQRYFYKVHQLE). Composition is skewed to basic and acidic residues over residues 208-219 (KQRADQSVHSEE) and 255-271 (HVEDKSEKTAELNRDHT). Disordered regions lie at residues 208-228 (KQRADQSVHSEEPTWEEEEED) and 255-386 (HVED…EFDM). The segment covering 274-287 (TSPSESSESISPIT) has biased composition (low complexity). The span at 297–322 (QTPSKEPSPGTLTVTKENTGAGTDET) shows a compositional bias: polar residues. The span at 342–352 (QREDPPSDLRV) shows a compositional bias: basic and acidic residues. The segment covering 356–375 (NSDSGKSTPSNNGQKGSSTD) has biased composition (polar residues). The span at 376 to 386 (ISEDWEKEFDM) shows a compositional bias: acidic residues.

This chain is BSD domain-containing protein 1-A (bsdc1-a), found in Xenopus laevis (African clawed frog).